Consider the following 238-residue polypeptide: ATP-dependent dethiobiotin synthetase BioD (238 aa).

ATP is bound at residue 12–17 (EVGKTV). Residue Thr-16 participates in Mg(2+) binding. The active site involves Lys-37. Thr-41 is a substrate binding site. ATP is bound by residues Asp-50, 109-112 (EGAG), 170-171 (GS), and 200-202 (PAG). 2 residues coordinate Mg(2+): Asp-50 and Glu-109.

This sequence belongs to the dethiobiotin synthetase family. Homodimer. Requires Mg(2+) as cofactor.

The protein resides in the cytoplasm. It catalyses the reaction (7R,8S)-7,8-diammoniononanoate + CO2 + ATP = (4R,5S)-dethiobiotin + ADP + phosphate + 3 H(+). It functions in the pathway cofactor biosynthesis; biotin biosynthesis; biotin from 7,8-diaminononanoate: step 1/2. In terms of biological role, catalyzes a mechanistically unusual reaction, the ATP-dependent insertion of CO2 between the N7 and N8 nitrogen atoms of 7,8-diaminopelargonic acid (DAPA, also called 7,8-diammoniononanoate) to form a ureido ring. In Parafrankia sp. (strain EAN1pec), this protein is ATP-dependent dethiobiotin synthetase BioD.